The following is a 79-amino-acid chain: Small ribosomal subunit protein bS18B (79 aa).

The protein belongs to the bacterial ribosomal protein bS18 family. Part of the 30S ribosomal subunit. Forms a tight heterodimer with protein bS6.

Binds as a heterodimer with protein bS6 to the central domain of the 16S rRNA, where it helps stabilize the platform of the 30S subunit. In Saccharopolyspora erythraea (strain ATCC 11635 / DSM 40517 / JCM 4748 / NBRC 13426 / NCIMB 8594 / NRRL 2338), this protein is Small ribosomal subunit protein bS18B.